Here is a 346-residue protein sequence, read N- to C-terminus: L-glyceraldehyde 3-phosphate reductase (346 aa).

NADP(+) contacts are provided by Trp-33, Asp-61, Tyr-66, Ser-168, Gln-193, Thr-223, Leu-225, Gln-227, Lys-233, Ser-303, Gln-307, and Asn-311.

This sequence belongs to the shaker potassium channel beta subunit family.

The enzyme catalyses a primary alcohol + NADP(+) = an aldehyde + NADPH + H(+). Aldo-keto reductase that catalyzes the stereospecific, NADPH-dependent reduction of L-glyceraldehyde 3-phosphate (L-GAP) to L-glycerol 3-phosphate (L-G3P). The protein is L-glyceraldehyde 3-phosphate reductase of Escherichia coli O157:H7.